The following is a 455-amino-acid chain: Glutamate-1-semialdehyde 2,1-aminomutase (455 aa).

Lys-286 is subject to N6-(pyridoxal phosphate)lysine.

This sequence belongs to the class-III pyridoxal-phosphate-dependent aminotransferase family. HemL subfamily. As to quaternary structure, homodimer. Pyridoxal 5'-phosphate is required as a cofactor.

The protein localises to the cytoplasm. The catalysed reaction is (S)-4-amino-5-oxopentanoate = 5-aminolevulinate. Its pathway is porphyrin-containing compound metabolism; protoporphyrin-IX biosynthesis; 5-aminolevulinate from L-glutamyl-tRNA(Glu): step 2/2. The protein is Glutamate-1-semialdehyde 2,1-aminomutase of Clavibacter sepedonicus (Clavibacter michiganensis subsp. sepedonicus).